Here is a 582-residue protein sequence, read N- to C-terminus: MAPRKTVGILGGGQLGRMLTHPAALLGIPLLILDSGSYTPAKQTLLPPPPHSHPDGPFTSETHIRKLASACDILTVEIEHVNADVLEAVEKEGLCEVQPSPKTIRLIQNKYDQKKYLAERGVAVAPFEELPANPTEEDFKAIAGRLGLPLMLKAKTLAYDGRGNSPLKSASSEDIQASLKFLGDRPLYAEGWAPFVKEVAVMVVRNKEGEVQSYDAVETIHRESILRVCLTPLRGEKGVNQRARELAEKAVGHLEGAGIFGVEMFLMPDGELLLNEIAPRPHNSGHHTIEACLTSQFENHLRAILSLPLGSTALRVPSAAMVNILGASSTMDAIDKMADNALTVPGAAVHLYGKAESRKARKMGHITVTAESDAELNERLRALLFAQPDAHADWIDLIAPPSPAPAHSHAKPLVGIIMGSDSDLPVMHPATKILEKFGVPYELTITSAHRTPERMVKYAKTAADRGLRAIIAGAGGAAHLPGMVASETSLPVIGVPVKASVLDGVDSLYSIVQMPRGIPCATVGINNSTNAALLAVRILGTSVPALNKATEEYSKALEEEVLAKVDILEEEGWDKYIERLKK.

In terms of domain architecture, ATP-grasp spans 114 to 305 (KKYLAERGVA…QFENHLRAIL (192 aa)). ATP is bound at residue 143–200 (AGRLGLPLMLKAKTLAYDGRGNSPLKSASSEDIQASLKFLGDRPLYAEGWAPFVKEVA).

The protein in the C-terminal section; belongs to the AIR carboxylase family. Class I subfamily.

The catalysed reaction is 5-amino-1-(5-phospho-D-ribosyl)imidazole-4-carboxylate + H(+) = 5-amino-1-(5-phospho-beta-D-ribosyl)imidazole + CO2. Its pathway is purine metabolism; IMP biosynthesis via de novo pathway; 5-amino-1-(5-phospho-D-ribosyl)imidazole-4-carboxylate from 5-amino-1-(5-phospho-D-ribosyl)imidazole (carboxylase route): step 1/1. This Cryptococcus neoformans var. neoformans serotype D (strain B-3501A) (Filobasidiella neoformans) protein is Phosphoribosylaminoimidazole carboxylase (ADE2).